The following is a 346-amino-acid chain: LRP2-binding protein (346 aa).

A TPR repeat occupies 58–91 (AMAYFLRGQLYFEEGWYEEALAQFEEIQEKDHQA). Sel1-like repeat units lie at residues 92-124 (IYQLGVMYYDGLGTIANAEKGVNYMRKILDSSC), 132-167 (FAAAYNLGRAYFEGKGVKRSDEEAERLWLLAADNGN), 172-205 (VKAQSILGLFYSMKEPKELEKAFFWHSEACGNGS), 206-241 (LESQGALGLMYFYGQGIRQDTDAALHCLREAAERGN), 242-276 (VYAQGTLVEYYYKMKFFTKCVSFSKRIADYDEVHD), and 296-331 (AMAAFYHGRCLQLGLGIMKDEESAKHYYSKACRLNP).

In terms of assembly, interacts with LRP2.

It is found in the cytoplasm. Its function is as follows. May act as an adapter that regulates LRP2 function. In Mus musculus (Mouse), this protein is LRP2-binding protein (Lrp2bp).